Here is a 572-residue protein sequence, read N- to C-terminus: Mitochondrial distribution and morphology protein 34 (572 aa).

The 195-residue stretch at 1–195 folds into the SMP-LTD domain; the sequence is MAFNFNWSPL…LPAIIHRLSL (195 aa). Disordered regions lie at residues 212 to 236, 355 to 426, 487 to 507, and 552 to 572; these read TASA…VDAL, GAGR…PDND, HGAS…GSSR, and ACGP…AYGH. A compositionally biased stretch (basic residues) spans 358-370; sequence RHSKAHARKRKKR. Residues 371-381 are compositionally biased toward basic and acidic residues; it reads VVDLRRPKTTD. Polar residues predominate over residues 387–400; the sequence is SDESSFTESTSAPS.

It belongs to the MDM34 family. As to quaternary structure, component of the ER-mitochondria encounter structure (ERMES) or MDM complex, composed of mmm1, mdm10, mdm12 and mdm34.

It is found in the mitochondrion outer membrane. Component of the ERMES/MDM complex, which serves as a molecular tether to connect the endoplasmic reticulum (ER) and mitochondria. Components of this complex are involved in the control of mitochondrial shape and protein biogenesis, and function in nonvesicular lipid trafficking between the ER and mitochondria. Mdm34 is required for the interaction of the ER-resident membrane protein mmm1 and the outer mitochondrial membrane-resident beta-barrel protein mdm10. In Aspergillus fumigatus (strain ATCC MYA-4609 / CBS 101355 / FGSC A1100 / Af293) (Neosartorya fumigata), this protein is Mitochondrial distribution and morphology protein 34.